The sequence spans 119 residues: DNA-binding protein MmarC7_1157 (119 aa).

The segment covering 1-12 has biased composition (basic and acidic residues); sequence MNPEEIRQRRLQ. Positions 1-37 are disordered; it reads MNPEEIRQRRLQEMQAKAQEQGAANDPEAQRQAQEQQ.

Belongs to the PDCD5 family.

The chain is DNA-binding protein MmarC7_1157 from Methanococcus maripaludis (strain C7 / ATCC BAA-1331).